The following is a 638-amino-acid chain: 1-deoxy-D-xylulose-5-phosphate synthase (638 aa).

Residues histidine 79 and 120–122 each bind thiamine diphosphate; that span reads AHS. Aspartate 151 contacts Mg(2+). Thiamine diphosphate is bound by residues 152–153, asparagine 180, tyrosine 289, and glutamate 371; that span reads GA. Asparagine 180 contributes to the Mg(2+) binding site.

This sequence belongs to the transketolase family. DXPS subfamily. As to quaternary structure, homodimer. The cofactor is Mg(2+). Thiamine diphosphate is required as a cofactor.

It catalyses the reaction D-glyceraldehyde 3-phosphate + pyruvate + H(+) = 1-deoxy-D-xylulose 5-phosphate + CO2. Its pathway is metabolic intermediate biosynthesis; 1-deoxy-D-xylulose 5-phosphate biosynthesis; 1-deoxy-D-xylulose 5-phosphate from D-glyceraldehyde 3-phosphate and pyruvate: step 1/1. Its function is as follows. Catalyzes the acyloin condensation reaction between C atoms 2 and 3 of pyruvate and glyceraldehyde 3-phosphate to yield 1-deoxy-D-xylulose-5-phosphate (DXP). The protein is 1-deoxy-D-xylulose-5-phosphate synthase of Rhizobium leguminosarum bv. trifolii (strain WSM2304).